The sequence spans 329 residues: GTP 3',8-cyclase (329 aa).

In terms of domain architecture, Radical SAM core spans 8-234 (AFARKFYYLR…QLRQRSDGPA (227 aa)). Arginine 17 is a GTP binding site. Cysteine 24 and cysteine 28 together coordinate [4Fe-4S] cluster. Residue tyrosine 30 coordinates S-adenosyl-L-methionine. Residue cysteine 31 coordinates [4Fe-4S] cluster. Arginine 68 is a GTP binding site. Glycine 72 serves as a coordination point for S-adenosyl-L-methionine. Residue threonine 99 participates in GTP binding. Serine 123 provides a ligand contact to S-adenosyl-L-methionine. Lysine 160 contributes to the GTP binding site. Methionine 194 provides a ligand contact to S-adenosyl-L-methionine. The [4Fe-4S] cluster site is built by cysteine 257 and cysteine 260. 262 to 264 (RLR) provides a ligand contact to GTP. [4Fe-4S] cluster is bound at residue cysteine 274.

It belongs to the radical SAM superfamily. MoaA family. In terms of assembly, monomer and homodimer. Requires [4Fe-4S] cluster as cofactor.

It carries out the reaction GTP + AH2 + S-adenosyl-L-methionine = (8S)-3',8-cyclo-7,8-dihydroguanosine 5'-triphosphate + 5'-deoxyadenosine + L-methionine + A + H(+). The protein operates within cofactor biosynthesis; molybdopterin biosynthesis. Functionally, catalyzes the cyclization of GTP to (8S)-3',8-cyclo-7,8-dihydroguanosine 5'-triphosphate. This Salmonella dublin (strain CT_02021853) protein is GTP 3',8-cyclase.